Here is a 260-residue protein sequence, read N- to C-terminus: Movement protein (260 aa).

Positions 230–260 are disordered; sequence SGDTAEEAGEASSGEPHWVPEATAPRVRKAT.

Transports viral genome to neighboring plant cells directly through plasmosdesmata, without any budding. The movement protein allows efficient cell to cell propagation, by bypassing the host cell wall barrier. Might act by forming tubules structures that increase the size exclusion limit (SEL) of plasmodesmata, thereby allowing viral ribonucleoproteins to spread directly to neighboring cells. Binds to ssRNA. In Groundnut rosette virus (strain MC1) (GRV), this protein is Movement protein.